The chain runs to 436 residues: Protein PhoH2 (436 aa).

The 126-residue stretch at 12–137 (RTYVLDTSVL…LVSKDLPMRL (126 aa)) folds into the PINc domain.

It in the N-terminal section; belongs to the PINc/VapC protein family. The protein in the C-terminal section; belongs to the PhoH family.

It carries out the reaction n ATP + n H2O + wound RNA = n ADP + n phosphate + unwound RNA.. The enzyme catalyses ATP + H2O = ADP + phosphate + H(+). It catalyses the reaction GTP + H2O = GDP + phosphate + H(+). Functionally, unwinds and/or cleaves 5'-tailed RNA in vitro, the reaction is maximal with hydrolyzable ATP; double-stranded (ds)RNA and dsDNA are not unwound. Unlike the protein in mycobacteria there does not seem to be an antitoxin gene upstream, suggesting this is not a toxin-antitoxin system. Has ATPase and GTPase activities. In Thermobispora bispora (strain ATCC 19993 / DSM 43833 / CBS 139.67 / JCM 10125 / KCTC 9307 / NBRC 14880 / R51), this protein is Protein PhoH2.